Here is a 352-residue protein sequence, read N- to C-terminus: Glycerol-1-phosphate dehydrogenase [NAD(P)+] (352 aa).

Residues 98–102 and 120–123 contribute to the NAD(+) site; these read GKAID and TAAS. A substrate-binding site is contributed by D125. Position 129 (S129) interacts with NAD(+). D172 is a substrate binding site. The Zn(2+) site is built by D172 and H252. H256 lines the substrate pocket. Residue H268 coordinates Zn(2+).

Belongs to the glycerol-1-phosphate dehydrogenase family. It depends on Zn(2+) as a cofactor.

The protein resides in the cytoplasm. It catalyses the reaction sn-glycerol 1-phosphate + NAD(+) = dihydroxyacetone phosphate + NADH + H(+). It carries out the reaction sn-glycerol 1-phosphate + NADP(+) = dihydroxyacetone phosphate + NADPH + H(+). It functions in the pathway membrane lipid metabolism; glycerophospholipid metabolism. Its function is as follows. Catalyzes the NAD(P)H-dependent reduction of dihydroxyacetonephosphate (DHAP or glycerone phosphate) to glycerol 1-phosphate (G1P). The G1P thus generated is used as the glycerophosphate backbone of phospholipids in the cellular membranes of Archaea. The protein is Glycerol-1-phosphate dehydrogenase [NAD(P)+] of Halobacterium salinarum (strain ATCC 29341 / DSM 671 / R1).